The following is a 561-amino-acid chain: Putative transport protein KPN78578_08530 (561 aa).

The next 5 helical transmembrane spans lie at 8-28 (LLNG…LCLG), 37-57 (LGNS…HFAI), 66-86 (FMLF…SIFF), 94-114 (MLAL…GKVF), and 158-178 (HLSL…IVGA). RCK C-terminal domains lie at 202–288 (LDTD…SFRN) and 292–373 (VFDR…RIGF). The next 5 helical transmembrane spans lie at 383–403 (LLAF…TFQF), 406–426 (FSFG…LGFL), 447–467 (FGLM…INNG), 478–498 (AGLI…AYVL), and 540–560 (AIAN…WPGL).

It belongs to the AAE transporter (TC 2.A.81) family. YbjL subfamily.

It is found in the cell membrane. This chain is Putative transport protein KPN78578_08530, found in Klebsiella pneumoniae subsp. pneumoniae (strain ATCC 700721 / MGH 78578).